Consider the following 290-residue polypeptide: UPF0750 membrane protein YdeO (290 aa).

Transmembrane regions (helical) follow at residues 18-38 (IIMVIIGGIIAAYGLETVLIP), 56-76 (LFNLPLGILIAVINIPFVWLG), 83-103 (SFALLSIIGIVSLAAGTSFFH), 112-132 (DTLLITVVGGIILGFGMGLAL), and 165-185 (LFVFIFVSTVFGLQGALLSVI).

The protein belongs to the UPF0750 family.

The protein localises to the cell membrane. This chain is UPF0750 membrane protein YdeO (ydeO), found in Bacillus subtilis (strain 168).